Reading from the N-terminus, the 123-residue chain is Large ribosomal subunit protein bL12 (123 aa).

It belongs to the bacterial ribosomal protein bL12 family. In terms of assembly, homodimer. Part of the ribosomal stalk of the 50S ribosomal subunit. Forms a multimeric L10(L12)X complex, where L10 forms an elongated spine to which 2 to 4 L12 dimers bind in a sequential fashion. Binds GTP-bound translation factors.

Forms part of the ribosomal stalk which helps the ribosome interact with GTP-bound translation factors. Is thus essential for accurate translation. The sequence is that of Large ribosomal subunit protein bL12 from Pseudoalteromonas atlantica (strain T6c / ATCC BAA-1087).